The chain runs to 827 residues: Lon protease 2 (827 aa).

A disordered region spans residues 1–22 (MSDEKKKGSAASAMPTAMAPPG). Residues 9–21 (SAASAMPTAMAPP) are compositionally biased toward low complexity. The Lon N-terminal domain occupies 33–227 (LPILPLRNSV…LVLELLNRKR (195 aa)). Residue 379 to 386 (GPPGVGKT) coordinates ATP. One can recognise a Lon proteolytic domain in the interval 615–796 (TEVPGVATGL…DDVLKAALET (182 aa)). Active-site residues include S702 and K745. A disordered region spans residues 799–827 (VGVAGTPGGEPGKEAPLPKPAESAPEVRA).

This sequence belongs to the peptidase S16 family. In terms of assembly, homohexamer. Organized in a ring with a central cavity.

The protein localises to the cytoplasm. It catalyses the reaction Hydrolysis of proteins in presence of ATP.. Functionally, ATP-dependent serine protease that mediates the selective degradation of mutant and abnormal proteins as well as certain short-lived regulatory proteins. Required for cellular homeostasis and for survival from DNA damage and developmental changes induced by stress. Degrades polypeptides processively to yield small peptide fragments that are 5 to 10 amino acids long. Binds to DNA in a double-stranded, site-specific manner. This chain is Lon protease 2, found in Myxococcus xanthus.